We begin with the raw amino-acid sequence, 216 residues long: MNLVLMGLPGAGKGTQAQLIVKDFDIPHISTGDIFRAAIKNQTPMGVEAKKFIDKGELVPDEVTNGIVQERLAQDDTKDGFMLDGFPRNLAQADALNAMLVDSDRQLDAVINIHVRPEVLVERLSGRFICRNCGTTYHRLYNPTKVEGTCDVCGGHDFYQRDDDKPETVKNRLDVNIKLNTPLIDFYKKQGVLYTIDGEQDIDKVYQAVKEVLTNL.

Residue 10-15 (GAGKGT) participates in ATP binding. The NMP stretch occupies residues 30 to 59 (STGDIFRAAIKNQTPMGVEAKKFIDKGELV). AMP-binding positions include threonine 31, arginine 36, 57–59 (ELV), 85–88 (GFPR), and glutamine 92. Positions 126 to 164 (GRFICRNCGTTYHRLYNPTKVEGTCDVCGGHDFYQRDDD) are LID. An ATP-binding site is contributed by arginine 127. Zn(2+) is bound by residues cysteine 130 and cysteine 133. 136–137 (TY) contacts ATP. Residues cysteine 150 and cysteine 153 each coordinate Zn(2+). Residues arginine 161 and arginine 172 each contribute to the AMP site. Residue glutamine 200 participates in ATP binding.

Belongs to the adenylate kinase family. Monomer.

Its subcellular location is the cytoplasm. It catalyses the reaction AMP + ATP = 2 ADP. It participates in purine metabolism; AMP biosynthesis via salvage pathway; AMP from ADP: step 1/1. Functionally, catalyzes the reversible transfer of the terminal phosphate group between ATP and AMP. Plays an important role in cellular energy homeostasis and in adenine nucleotide metabolism. This Limosilactobacillus fermentum (strain NBRC 3956 / LMG 18251) (Lactobacillus fermentum) protein is Adenylate kinase.